A 269-amino-acid chain; its full sequence is Formamidopyrimidine-DNA glycosylase (269 aa).

Pro2 acts as the Schiff-base intermediate with DNA in catalysis. The active-site Proton donor is Glu3. Lys57 acts as the Proton donor; for beta-elimination activity in catalysis. DNA-binding residues include His90, Arg109, and Lys150. An FPG-type zinc finger spans residues 235-269 (QVYGRAGEPCRACGTPIESAKHGQRSTFFCPRCQR). Arg259 acts as the Proton donor; for delta-elimination activity in catalysis.

This sequence belongs to the FPG family. As to quaternary structure, monomer. Zn(2+) serves as cofactor.

It catalyses the reaction Hydrolysis of DNA containing ring-opened 7-methylguanine residues, releasing 2,6-diamino-4-hydroxy-5-(N-methyl)formamidopyrimidine.. The catalysed reaction is 2'-deoxyribonucleotide-(2'-deoxyribose 5'-phosphate)-2'-deoxyribonucleotide-DNA = a 3'-end 2'-deoxyribonucleotide-(2,3-dehydro-2,3-deoxyribose 5'-phosphate)-DNA + a 5'-end 5'-phospho-2'-deoxyribonucleoside-DNA + H(+). Involved in base excision repair of DNA damaged by oxidation or by mutagenic agents. Acts as a DNA glycosylase that recognizes and removes damaged bases. Has a preference for oxidized purines, such as 7,8-dihydro-8-oxoguanine (8-oxoG). Has AP (apurinic/apyrimidinic) lyase activity and introduces nicks in the DNA strand. Cleaves the DNA backbone by beta-delta elimination to generate a single-strand break at the site of the removed base with both 3'- and 5'-phosphates. The sequence is that of Formamidopyrimidine-DNA glycosylase from Serratia proteamaculans (strain 568).